The following is a 199-amino-acid chain: TATA-box-binding protein (199 aa).

A run of 2 repeats spans residues isoleucine 10 to leucine 86 and isoleucine 101 to leucine 177.

This sequence belongs to the TBP family.

Functionally, general factor that plays a role in the activation of archaeal genes transcribed by RNA polymerase. Binds specifically to the TATA box promoter element which lies close to the position of transcription initiation. This chain is TATA-box-binding protein, found in Pyrobaculum aerophilum (strain ATCC 51768 / DSM 7523 / JCM 9630 / CIP 104966 / NBRC 100827 / IM2).